The sequence spans 320 residues: Nod factor export ATP-binding protein I (320 aa).

The region spanning 15–245 is the ABC transporter domain; sequence VSATGVWKKR…LGALKILEID (231 aa). ATP is bound at residue 47-54; sequence GTNGAGKS.

The protein belongs to the ABC transporter superfamily. Lipooligosaccharide exporter (TC 3.A.1.102) family. The complex is composed of two ATP-binding proteins (NodI) and two transmembrane proteins (NodJ).

It is found in the cell inner membrane. In terms of biological role, part of the ABC transporter complex NodIJ involved in the export of the nodulation factors (Nod factors), the bacterial signal molecules that induce symbiosis and subsequent nodulation induction. Nod factors are LCO (lipo-chitin oligosaccharide), a modified beta-1,4-linked N-acetylglucosamine oligosaccharide. This subunit is responsible for energy coupling to the transport system. In Azorhizobium caulinodans (strain ATCC 43989 / DSM 5975 / JCM 20966 / LMG 6465 / NBRC 14845 / NCIMB 13405 / ORS 571), this protein is Nod factor export ATP-binding protein I.